The chain runs to 147 residues: 3-dehydroquinate dehydratase (147 aa).

The active-site Proton acceptor is the Tyr23. Residues Asn75, His81, and Asp88 each contribute to the substrate site. The active-site Proton donor is His101. Substrate-binding positions include 102 to 103 and Arg112; that span reads LS.

Belongs to the type-II 3-dehydroquinase family. In terms of assembly, homododecamer.

It carries out the reaction 3-dehydroquinate = 3-dehydroshikimate + H2O. The protein operates within metabolic intermediate biosynthesis; chorismate biosynthesis; chorismate from D-erythrose 4-phosphate and phosphoenolpyruvate: step 3/7. In terms of biological role, catalyzes a trans-dehydration via an enolate intermediate. In Stenotrophomonas maltophilia (strain K279a), this protein is 3-dehydroquinate dehydratase.